Consider the following 181-residue polypeptide: Oligoribonuclease (181 aa).

Residues 8–171 (LVWIDMEMTG…DDIRESIAEL (164 aa)) form the Exonuclease domain. Tyr129 is a catalytic residue.

This sequence belongs to the oligoribonuclease family.

The protein resides in the cytoplasm. Functionally, 3'-to-5' exoribonuclease specific for small oligoribonucleotides. In Aeromonas hydrophila subsp. hydrophila (strain ATCC 7966 / DSM 30187 / BCRC 13018 / CCUG 14551 / JCM 1027 / KCTC 2358 / NCIMB 9240 / NCTC 8049), this protein is Oligoribonuclease.